We begin with the raw amino-acid sequence, 220 residues long: GTP cyclohydrolase 1 (220 aa).

3 residues coordinate Zn(2+): C109, H112, and C180.

This sequence belongs to the GTP cyclohydrolase I family. In terms of assembly, homomer.

It carries out the reaction GTP + H2O = 7,8-dihydroneopterin 3'-triphosphate + formate + H(+). It functions in the pathway cofactor biosynthesis; 7,8-dihydroneopterin triphosphate biosynthesis; 7,8-dihydroneopterin triphosphate from GTP: step 1/1. In Pectobacterium carotovorum subsp. carotovorum (strain PC1), this protein is GTP cyclohydrolase 1.